A 917-amino-acid chain; its full sequence is MADEALAGLDEGALRKLLEVTADLAERRRIRSAIRELQRQELEREEEALASKRFRAERQDNKENWLHSQQREAEQRAALARLAGQLESMNDVEELTALLRSAGEYEERKLIRAAIRRVRAQEIEAATLAGRLYSGRPNSGSREDSKGLAAHRLEQCEVPEREEQEQQAEVSKPTPTPEGTSQDVTTVTLLLRAPPGSTSSSPASPSSSPTPASPEPPLEPAEAQCLTAEVPGSPEPPPSPPKTTSPEPQESPTLPSTEGQVVNKLLSGPKETPAAQSPTRGPSDTKRADVAGPRPCQRSLSVLSPRQPAQNRESTPLASGPSSFQRAGSVRDRVHKFTSDSPMAARLQDGTPQAALSPLTPARLLGPSLTSTTPASSSSGSSSRGPSDTSSRFSKEQRGVAQPLAQLRSCPQEEGPRGRGLAARPLENRAGGPVARSEEPGAPLPVAVGTAEPGGSMKTTFTIEIKDGRGQASTGRVLLPTGNQRAELTLGLRAPPTLLSTSSGGKSTITRVNSPGTLARLGSVTHVTSFSHAPPSSRGGCSIKMEAEPAEPLAAAVEAANGAEQTRVNKAPEGRSPLSAEELMTIEDEGVLDKMLDQSTDFEERKLIRAALRELRQRKRDQRDKERERRLQEARGRPGEGRGNTATETTTRHSQRAADGSAVSTVTKTERLVHSNDGTRTARTTTVESSFVRRSENGSGSTMMQTKTFSSSSSSKKMGSIFDREDQASPRAGSLAALEKRQAEKKKELMKAQSLPKTSASQARKAMIEKLEKEGAAGSPGGPRAAVQRSTSFGVPNANSIKQMLLDWCRAKTRGYEHVDIQNFSSSWSDGMAFCALVHNFFPEAFDYGQLSPQNRRQNFEVAFSSAEMLVDCVPLVEVDDMMIMGKKPDPKCVFTYVQSLYNHLRRHELRLRGKNV.

Ala-2 is modified (N-acetylalanine). Positions 24 to 89 (LAERRRIRSA…ARLAGQLESM (66 aa)) form a coiled coil. The tract at residues 157 to 456 (EVPEREEQEQ…AVGTAEPGGS (300 aa)) is disordered. Over residues 177 to 188 (PEGTSQDVTTVT) the composition is skewed to polar residues. 2 stretches are compositionally biased toward low complexity: residues 193–210 (APPGSTSSSPASPSSSPT) and 220–232 (PAEAQCLTAEVPG). The span at 233–243 (SPEPPPSPPKT) shows a compositional bias: pro residues. Positions 244–258 (TSPEPQESPTLPSTE) are enriched in low complexity. A compositionally biased stretch (polar residues) spans 298–326 (RSLSVLSPRQPAQNRESTPLASGPSSFQR). Phosphoserine occurs at positions 299, 301, and 304. Positions 329-338 (SVRDRVHKFT) are enriched in basic and acidic residues. Ser-341 carries the phosphoserine modification. Position 351 is a phosphothreonine (Thr-351). A Phosphoserine modification is found at Ser-357. 2 positions are modified to phosphothreonine: Thr-360 and Thr-373. Over residues 363–392 (RLLGPSLTSTTPASSSSGSSSRGPSDTSSR) the composition is skewed to low complexity. 4 positions are modified to phosphoserine: Ser-503, Ser-514, Ser-523, and Ser-576. 2 disordered regions span residues 560–580 (ANGAEQTRVNKAPEGRSPLSA) and 617–767 (QRKR…RKAM). The stretch at 603-630 (EERKLIRAALRELRQRKRDQRDKERERR) forms a coiled coil. The segment covering 617–640 (QRKRDQRDKERERRLQEARGRPGE) has biased composition (basic and acidic residues). The segment covering 676 to 689 (NDGTRTARTTTVES) has biased composition (polar residues). Residues 701–720 (STMMQTKTFSSSSSSKKMGS) show a composition bias toward low complexity. Ser-729 is subject to Phosphoserine. Residues 738 to 750 (LEKRQAEKKKELM) are compositionally biased toward basic and acidic residues. Ser-792 bears the Phosphoserine mark. The Calponin-homology (CH) domain occupies 799 to 906 (NSIKQMLLDW…YVQSLYNHLR (108 aa)).

This sequence belongs to the smoothelin family. In terms of tissue distribution, smooth muscle; contractile or vascular (for the long form).

It localises to the cytoplasm. The protein resides in the cytoskeleton. Its function is as follows. Structural protein of the cytoskeleton. The sequence is that of Smoothelin (SMTN) from Homo sapiens (Human).